We begin with the raw amino-acid sequence, 213 residues long: High frequency lysogenization protein HflD homolog (213 aa).

Positions 79–122 (QGLNAELTRYTLSLMVLERKLSSAKGALNTLGDRINGLQRQLDH) form a coiled coil.

Belongs to the HflD family.

It is found in the cytoplasm. The protein localises to the cell inner membrane. The polypeptide is High frequency lysogenization protein HflD homolog (Salmonella agona (strain SL483)).